The primary structure comprises 352 residues: uncharacterized protein (352 aa).

A chloroplast-targeting transit peptide spans 1–55; the sequence is MAMAALTSSSSAITLLNKPFLPNRSSFFSSDSQSPLLRFSASTSVRSRFPSAAIS.

It belongs to the methyltransferase superfamily.

Its subcellular location is the plastid. It is found in the chloroplast. The protein resides in the plastoglobule. This is an uncharacterized protein from Arabidopsis thaliana (Mouse-ear cress).